Here is a 153-residue protein sequence, read N- to C-terminus: Small heat shock protein HspB (153 aa).

In terms of domain architecture, sHSP spans 30–140 (AGTEDNYPPC…KPRRISISGS (111 aa)).

It belongs to the small heat shock protein (HSP20) family.

This Bradyrhizobium diazoefficiens (strain JCM 10833 / BCRC 13528 / IAM 13628 / NBRC 14792 / USDA 110) protein is Small heat shock protein HspB (hspB).